The following is a 371-amino-acid chain: Alanine dehydrogenase (371 aa).

Substrate-binding residues include Arg15 and Lys74. The active-site Proton donor/acceptor is His95. NAD(+)-binding positions include Ser133, 177–178 (QA), Asp197, Ser219, 238–239 (VL), 266–269 (IAID), and 298–301 (VANM). Asp269 serves as the catalytic Proton donor/acceptor.

This sequence belongs to the AlaDH/PNT family. Homohexamer. Trimer of dimer.

It carries out the reaction L-alanine + NAD(+) + H2O = pyruvate + NH4(+) + NADH + H(+). It participates in amino-acid degradation; L-alanine degradation via dehydrogenase pathway; NH(3) and pyruvate from L-alanine: step 1/1. In terms of biological role, catalyzes the reversible reductive amination of pyruvate to L-alanine. May play a role in cell wall synthesis as L-alanine is an important constituent of the peptidoglycan layer. The polypeptide is Alanine dehydrogenase (ald) (Staphylococcus epidermidis (strain ATCC 35984 / DSM 28319 / BCRC 17069 / CCUG 31568 / BM 3577 / RP62A)).